The chain runs to 425 residues: Dihydroorotase (425 aa).

Zn(2+) contacts are provided by His-56 and His-58. Substrate is bound by residues 58 to 60 and Asn-90; that span reads HWR. The Zn(2+) site is built by Asp-147, His-174, and His-227. Residue Asn-273 coordinates substrate. Residue Asp-300 coordinates Zn(2+). The active site involves Asp-300. Substrate is bound by residues His-304 and 318 to 319; that span reads FG.

Belongs to the metallo-dependent hydrolases superfamily. DHOase family. Class I DHOase subfamily. Zn(2+) serves as cofactor.

It catalyses the reaction (S)-dihydroorotate + H2O = N-carbamoyl-L-aspartate + H(+). Its pathway is pyrimidine metabolism; UMP biosynthesis via de novo pathway; (S)-dihydroorotate from bicarbonate: step 3/3. Functionally, catalyzes the reversible cyclization of carbamoyl aspartate to dihydroorotate. The chain is Dihydroorotase from Fusobacterium nucleatum subsp. nucleatum (strain ATCC 25586 / DSM 15643 / BCRC 10681 / CIP 101130 / JCM 8532 / KCTC 2640 / LMG 13131 / VPI 4355).